A 458-amino-acid chain; its full sequence is BTB/POZ domain-containing protein At5g41330 (458 aa).

The BTB domain maps to 11-72 (NVVSINVGGR…LRTGNLPARS (62 aa)). WD repeat units follow at residues 259-305 (DSAI…MVWE), 360-399 (LNER…LVGN), and 421-458 (SGEN…GISI).

Its pathway is protein modification; protein ubiquitination. In terms of biological role, may act as a substrate-specific adapter of an E3 ubiquitin-protein ligase complex (CUL3-RBX1-BTB) which mediates the ubiquitination and subsequent proteasomal degradation of target proteins. The polypeptide is BTB/POZ domain-containing protein At5g41330 (Arabidopsis thaliana (Mouse-ear cress)).